Consider the following 215-residue polypeptide: UPF0502 protein YceH (215 aa).

An N6-acetyllysine modification is found at K80.

It belongs to the UPF0502 family.

In Escherichia coli O127:H6 (strain E2348/69 / EPEC), this protein is UPF0502 protein YceH.